The primary structure comprises 347 residues: Probable tRNA N6-adenosine threonylcarbamoyltransferase (347 aa).

Positions 109, 113, and 130 each coordinate a divalent metal cation. Substrate contacts are provided by residues Y130–G134, D162, G177, E181, and N277. Position 305 (D305) interacts with a divalent metal cation.

The protein belongs to the KAE1 / TsaD family. Component of the EKC/KEOPS complex; the whole complex dimerizes. A divalent metal cation serves as cofactor.

It localises to the cytoplasm. Its subcellular location is the nucleus. The enzyme catalyses L-threonylcarbamoyladenylate + adenosine(37) in tRNA = N(6)-L-threonylcarbamoyladenosine(37) in tRNA + AMP + H(+). Component of the EKC/KEOPS complex that is required for the formation of a threonylcarbamoyl group on adenosine at position 37 (t(6)A37) in tRNAs that read codons beginning with adenine. The complex is probably involved in the transfer of the threonylcarbamoyl moiety of threonylcarbamoyl-AMP (TC-AMP) to the N6 group of A37. Likely plays a direct catalytic role in this reaction, but requires other protein(s) of the complex to fulfill this activity. This chain is Probable tRNA N6-adenosine threonylcarbamoyltransferase, found in Drosophila melanogaster (Fruit fly).